Consider the following 251-residue polypeptide: Triosephosphate isomerase (251 aa).

9–11 is a binding site for substrate; sequence NWK. The Electrophile role is filled by His95. Residue Glu167 is the Proton acceptor of the active site. Residues Gly173, Ser213, and 234–235 contribute to the substrate site; that span reads GG. Position 213 is a phosphoserine (Ser213).

This sequence belongs to the triosephosphate isomerase family. As to quaternary structure, homodimer.

It is found in the cytoplasm. The catalysed reaction is D-glyceraldehyde 3-phosphate = dihydroxyacetone phosphate. It participates in carbohydrate biosynthesis; gluconeogenesis. It functions in the pathway carbohydrate degradation; glycolysis; D-glyceraldehyde 3-phosphate from glycerone phosphate: step 1/1. Functionally, involved in the gluconeogenesis. Catalyzes stereospecifically the conversion of dihydroxyacetone phosphate (DHAP) to D-glyceraldehyde-3-phosphate (G3P). In Priestia megaterium (strain DSM 319 / IMG 1521) (Bacillus megaterium), this protein is Triosephosphate isomerase.